A 49-amino-acid polypeptide reads, in one-letter code: Large ribosomal subunit protein bL33B (49 aa).

Belongs to the bacterial ribosomal protein bL33 family.

This chain is Large ribosomal subunit protein bL33B, found in Levilactobacillus brevis (strain ATCC 367 / BCRC 12310 / CIP 105137 / JCM 1170 / LMG 11437 / NCIMB 947 / NCTC 947) (Lactobacillus brevis).